Consider the following 148-residue polypeptide: Ubiquitin-conjugating enzyme E2 13 (148 aa).

Residues 2-148 enclose the UBC core domain; sequence ALPKRIIKEI…AREWTKKYAV (147 aa). Residue cysteine 86 is the Glycyl thioester intermediate of the active site.

Belongs to the ubiquitin-conjugating enzyme family. Heterodimer with spm2.

It carries out the reaction S-ubiquitinyl-[E1 ubiquitin-activating enzyme]-L-cysteine + [E2 ubiquitin-conjugating enzyme]-L-cysteine = [E1 ubiquitin-activating enzyme]-L-cysteine + S-ubiquitinyl-[E2 ubiquitin-conjugating enzyme]-L-cysteine.. It functions in the pathway protein modification; protein ubiquitination. Its function is as follows. Has a role in the DNA error-free postreplication repair (PRR) pathway. The ubc13/spm2 heterodimer catalyzes the synthesis of non-canonical poly-ubiquitin chains that are linked through 'Lys-63'. This chain is Ubiquitin-conjugating enzyme E2 13 (ubc13), found in Schizosaccharomyces pombe (strain 972 / ATCC 24843) (Fission yeast).